Consider the following 64-residue polypeptide: Large ribosomal subunit protein bL28C (64 aa).

Belongs to the bacterial ribosomal protein bL28 family.

The sequence is that of Large ribosomal subunit protein bL28C from Mycobacterium tuberculosis (strain ATCC 25618 / H37Rv).